The chain runs to 200 residues: Superoxide dismutase [Mn] 2 (200 aa).

Mn(2+) contacts are provided by His28, His76, Asp158, and His162.

It belongs to the iron/manganese superoxide dismutase family. It depends on Mn(2+) as a cofactor.

The enzyme catalyses 2 superoxide + 2 H(+) = H2O2 + O2. Destroys superoxide anion radicals which are normally produced within the cells and which are toxic to biological systems. In Halobacterium salinarum (strain ATCC 700922 / JCM 11081 / NRC-1) (Halobacterium halobium), this protein is Superoxide dismutase [Mn] 2 (sod2).